The chain runs to 107 residues: MSGFSLSDLESIVAERSKAPPEQSWTAKLVAGGQPKAAKKLGEEAIEAVMAAVTGDRDNLTYEAADVLYHLLVVLKIAEIPLENVMAELERRTAQSGLKEKASRQSS.

The protein belongs to the PRA-PH family.

The protein localises to the cytoplasm. The enzyme catalyses 1-(5-phospho-beta-D-ribosyl)-ATP + H2O = 1-(5-phospho-beta-D-ribosyl)-5'-AMP + diphosphate + H(+). The protein operates within amino-acid biosynthesis; L-histidine biosynthesis; L-histidine from 5-phospho-alpha-D-ribose 1-diphosphate: step 2/9. The chain is Phosphoribosyl-ATP pyrophosphatase from Rhizobium johnstonii (strain DSM 114642 / LMG 32736 / 3841) (Rhizobium leguminosarum bv. viciae).